Consider the following 310-residue polypeptide: MKGQQKTAETEEGTVQIQEGAVATGEDPTSVAIASIQSAATFPDPNVKYVFRTENGGQVMYRVIQVSEGQLDGQTEGTGAISGYPATQSMTQAVIQGAFTSDDAVDTEGTAAETHYTYFPSTAVGDGAGGTTSGSTAAVVTTQGSEALLGQATPPGTGQFFVMMSPQEVLQGGSQRSIAPRTHPYSPKSEAPRTTRDEKRRAQHNEVERRRRDKINNWIVQLSKIIPDCSMESTKSGQSKGGILSKACDYIQELRQSNHRLSEELQGLDQLQLDNDVLRQQVEDLKNKNLLLRAQLRHHGVEVVIKSDSN.

The span at 1 to 17 (MKGQQKTAETEEGTVQI) shows a compositional bias: polar residues. Disordered stretches follow at residues 1–26 (MKGQ…ATGE) and 171–209 (QGGS…EVER). The segment covering 190-209 (EAPRTTRDEKRRAQHNEVER) has biased composition (basic and acidic residues). A bHLH domain is found at 199-254 (KRRAQHNEVERRRRDKINNWIVQLSKIIPDCSMESTKSGQSKGGILSKACDYIQEL). The interval 271–292 (LQLDNDVLRQQVEDLKNKNLLL) is leucine-zipper. A Glycyl lysine isopeptide (Lys-Gly) (interchain with G-Cter in SUMO2) cross-link involves residue K306.

In terms of assembly, efficient DNA binding requires dimerization with another bHLH protein. Binds DNA as a homodimer or a heterodimer (USF1/USF2).

The protein resides in the nucleus. Functionally, transcription factor that binds to a symmetrical DNA sequence (E-boxes) (5'-CACGTG-3') that is found in a variety of viral and cellular promoters. This chain is Upstream stimulatory factor 1 (USF1), found in Bos taurus (Bovine).